A 203-amino-acid polypeptide reads, in one-letter code: MDHSKQQNASITQAQAEEAVRTLLRWAGEDPTREGLLDTPRRVVEAYGDWFSGYREDPHDYLQRTFEEISCYDEMIVLRNITYESHCEHHMAPIIGKVHVGYLPNGKVVGISKLARVVESYARRFQIQEKMTAQIAACIQDTLTPRGVGVVIEGAHACMTTRGIHKRGVSMVTSKMLGTFREDARTRAEFLQFIEVGTNVIDL.

Zn(2+)-binding residues include Cys-87, His-90, and Cys-158.

It belongs to the GTP cyclohydrolase I family. In terms of assembly, homomer.

It carries out the reaction GTP + H2O = 7,8-dihydroneopterin 3'-triphosphate + formate + H(+). Its pathway is cofactor biosynthesis; 7,8-dihydroneopterin triphosphate biosynthesis; 7,8-dihydroneopterin triphosphate from GTP: step 1/1. The protein is GTP cyclohydrolase 1 of Xylella fastidiosa (strain M23).